Here is a 439-residue protein sequence, read N- to C-terminus: Serine--tRNA ligase (439 aa).

237-239 contributes to the L-serine binding site; that stretch reads TAE. Position 268-270 (268-270) interacts with ATP; sequence RAE. Position 291 (glutamate 291) interacts with L-serine. 362–365 is a binding site for ATP; it reads EISS. Serine 397 contributes to the L-serine binding site.

This sequence belongs to the class-II aminoacyl-tRNA synthetase family. Type-1 seryl-tRNA synthetase subfamily. Homodimer. The tRNA molecule binds across the dimer.

Its subcellular location is the cytoplasm. It catalyses the reaction tRNA(Ser) + L-serine + ATP = L-seryl-tRNA(Ser) + AMP + diphosphate + H(+). The enzyme catalyses tRNA(Sec) + L-serine + ATP = L-seryl-tRNA(Sec) + AMP + diphosphate + H(+). It functions in the pathway aminoacyl-tRNA biosynthesis; selenocysteinyl-tRNA(Sec) biosynthesis; L-seryl-tRNA(Sec) from L-serine and tRNA(Sec): step 1/1. Functionally, catalyzes the attachment of serine to tRNA(Ser). Is also able to aminoacylate tRNA(Sec) with serine, to form the misacylated tRNA L-seryl-tRNA(Sec), which will be further converted into selenocysteinyl-tRNA(Sec). This Afipia carboxidovorans (strain ATCC 49405 / DSM 1227 / KCTC 32145 / OM5) (Oligotropha carboxidovorans) protein is Serine--tRNA ligase.